Consider the following 296-residue polypeptide: MLDTLQKHGHCEVDTARIYGFGSTEEHLAQLKWQERGIAVGTKLTAKKIGPKEYSHKKESLKPGLSESLKALGSERVDTFYLHTPDHNTPYAETLEAVNELYKAGYFKKFGICNYAAWEVAQICELCNANGWKKPDIYQGAYSALQRNIETELFPCLRYYGISFYSFSPLAGGMLTDRYGRETSEYEGGNRFDPNNARGFYRKLYWNEPTFAALDIIRPLAQKHGMTTTKAALRWISHHSAMKGDKGDAVVIGSSSAEQLESNLSNLEKGPLPEDLVQAFEEAWSVVKVNTAPYFA.

Residue aspartate 14 participates in NADP(+) binding. The active-site Proton donor is tyrosine 19. Residue histidine 83 coordinates substrate. NADP(+) is bound by residues 113 to 114, glutamine 139, 168 to 178, and arginine 191; these read CN and SPLAGGMLTDR. Tyrosine 201 contacts substrate. 255 to 263 lines the NADP(+) pocket; that stretch reads SSAEQLESN.

The protein belongs to the aldo/keto reductase family. Aldo/keto reductase 2 subfamily.

It participates in secondary metabolite biosynthesis. Functionally, aldo-keto reductase; part of the gene cluster that mediates the biosynthesis of an emodin derivative that may be involved in black Sigatoka disease of banana. The pathway begins with the synthesis of atrochrysone thioester by the polyketide synthase PKS8-1. The atrochrysone carboxyl ACP thioesterase MYCFIDRAFT_190111 then breaks the thioester bond and releases the atrochrysone carboxylic acid from PKS8-1. The decarboxylase MYCFIDRAFT_34057 then catalyzes the concerted decarboxylation-elimination required to convert atochrysone carboxylic acid into emodin anthrone, which is further oxidized to emodin by the anthrone oxygenase MYCFIDRAFT_34418. The functions of the other tailoring enzymes as well as the final product of the cluster have still to be identified. This Pseudocercospora fijiensis (strain CIRAD86) (Black leaf streak disease fungus) protein is Aldo-keto reductase MYCFIDRAFT_156381.